The primary structure comprises 288 residues: ATP synthase gamma chain (288 aa).

Belongs to the ATPase gamma chain family. F-type ATPases have 2 components, CF(1) - the catalytic core - and CF(0) - the membrane proton channel. CF(1) has five subunits: alpha(3), beta(3), gamma(1), delta(1), epsilon(1). CF(0) has three main subunits: a, b and c.

It localises to the cell inner membrane. In terms of biological role, produces ATP from ADP in the presence of a proton gradient across the membrane. The gamma chain is believed to be important in regulating ATPase activity and the flow of protons through the CF(0) complex. The sequence is that of ATP synthase gamma chain from Legionella pneumophila (strain Paris).